The primary structure comprises 990 residues: Fibronectin-binding protein A (990 aa).

The signal sequence occupies residues Met-1–Ala-35. The short motif at Tyr-7–Ser-18 is the YSIRK-G/S signaling motif element. 2 disordered regions span residues Lys-33–Gln-61 and Pro-96–Lys-193. The segment covering Thr-37–Asn-55 has biased composition (polar residues). The segment at Thr-37–Asn-511 is ligand-binding A region. Basic and acidic residues-rich tracts occupy residues Thr-112–Val-126 and Asp-179–Lys-193. Residues Gly-194–Asn-511 form a fibrinogen/elastin/tropoelastin-binding region. The tract at residues Gly-512–Thr-834 is fibronectin-binding. Residues Glu-545–Ile-574 form a B-1 repeat. The 2 X approximate tandem repeats stretch occupies residues Glu-545–Ser-604. The B-2 repeat unit spans residues Glu-575–Ser-604. The interval Leu-702–Phe-969 is disordered. The stretch at Gly-707 to Gln-744 is one D-1 repeat. The segment at Gly-707–Thr-850 is 4 X approximate tandem repeats. The span at Pro-741–Ser-752 shows a compositional bias: polar residues. One copy of the D-2 repeat lies at Gly-745–His-782. The stretch at Gly-783–Ser-821 is one D-3 repeat. Residues Lys-786 to Pro-800 show a composition bias toward basic and acidic residues. The stretch at Gly-822–Thr-850 is one D-4; truncated repeat. The segment covering Pro-836–Pro-910 has biased composition (pro residues). WR repeat units lie at residues Pro-851 to Thr-864, Pro-865 to Thr-878, Pro-879 to Thr-892, Pro-893 to Lys-906, and Pro-907 to Lys-920. Residues Pro-851–Lys-920 form a 5 X tandem repeats, Pro-rich (WR) region. Residues Leu-954 to Gly-958 carry the LPXTG sorting signal motif. Residue Thr-957 is modified to Pentaglycyl murein peptidoglycan amidated threonine. A propeptide spans Gly-958 to Ala-990 (removed by sortase).

It localises to the secreted. The protein resides in the cell wall. In terms of biological role, promotes bacterial attachment to multiple substrates, such as fibronectin (Fn), fibrinogen (Fg), elastin peptides and tropoelastin. This confers to S.aureus the ability to invade endothelial cells. Promotes adherence to and aggregation of activated platelets. This chain is Fibronectin-binding protein A (fnbA), found in Staphylococcus aureus (strain bovine RF122 / ET3-1).